Reading from the N-terminus, the 393-residue chain is Formate-dependent phosphoribosylglycinamide formyltransferase (393 aa).

N(1)-(5-phospho-beta-D-ribosyl)glycinamide contacts are provided by residues 22–23 and glutamate 82; that span reads EL. ATP contacts are provided by residues arginine 114, lysine 155, 160-165, 195-198, and glutamate 203; these read SSGKGQ and EGFI. The region spanning 119–308 is the ATP-grasp domain; the sequence is RLAAEELDLP…QFALHARAIL (190 aa). Positions 267 and 279 each coordinate Mg(2+). N(1)-(5-phospho-beta-D-ribosyl)glycinamide contacts are provided by residues aspartate 286, lysine 356, and 363–364; that span reads RR.

It belongs to the PurK/PurT family. Homodimer.

It catalyses the reaction N(1)-(5-phospho-beta-D-ribosyl)glycinamide + formate + ATP = N(2)-formyl-N(1)-(5-phospho-beta-D-ribosyl)glycinamide + ADP + phosphate + H(+). It functions in the pathway purine metabolism; IMP biosynthesis via de novo pathway; N(2)-formyl-N(1)-(5-phospho-D-ribosyl)glycinamide from N(1)-(5-phospho-D-ribosyl)glycinamide (formate route): step 1/1. Involved in the de novo purine biosynthesis. Catalyzes the transfer of formate to 5-phospho-ribosyl-glycinamide (GAR), producing 5-phospho-ribosyl-N-formylglycinamide (FGAR). Formate is provided by PurU via hydrolysis of 10-formyl-tetrahydrofolate. This is Formate-dependent phosphoribosylglycinamide formyltransferase from Pseudomonas fluorescens (strain Pf0-1).